Consider the following 449-residue polypeptide: Trigger factor (449 aa).

The PPIase FKBP-type domain maps to 162–247 (GDTVTIDYTG…IHEVKSKELP (86 aa)). Positions 427–438 (AKKATKKSTAKK) are enriched in basic residues. The disordered stretch occupies residues 427 to 449 (AKKATKKSTAKKSTKEDEKKADK). Residues 439–449 (STKEDEKKADK) show a composition bias toward basic and acidic residues.

Belongs to the FKBP-type PPIase family. Tig subfamily.

It is found in the cytoplasm. The catalysed reaction is [protein]-peptidylproline (omega=180) = [protein]-peptidylproline (omega=0). Its function is as follows. Involved in protein export. Acts as a chaperone by maintaining the newly synthesized protein in an open conformation. Functions as a peptidyl-prolyl cis-trans isomerase. The chain is Trigger factor from Lactobacillus gasseri (strain ATCC 33323 / DSM 20243 / BCRC 14619 / CIP 102991 / JCM 1131 / KCTC 3163 / NCIMB 11718 / NCTC 13722 / AM63).